The following is a 788-amino-acid chain: Diacylglycerol kinase gamma (788 aa).

Over residues 83–93 (PRQETPDHPKE) the composition is skewed to basic and acidic residues. The disordered stretch occupies residues 83 to 150 (PRQETPDHPK…WGEPNAPASS (68 aa)). Positions 95 to 109 (ASSSEPNVSDSNAES) are enriched in polar residues. 2 consecutive EF-hand domains span residues 172 to 207 (RPQDKLEFMFRLYDSDENELLDQAELDQIVSQMLHV) and 217 to 252 (ELRPILKEMLQGMDYNKDGFVSLEEWVSGGMTTIPL). Ca(2+) is bound by residues aspartate 185, aspartate 187, asparagine 189, glutamate 196, aspartate 230, asparagine 232, aspartate 234, and glutamate 241. Phorbol-ester/DAG-type zinc fingers lie at residues 268 to 318 (RHAW…IPGC) and 333 to 380 (QHAW…STAC). In terms of domain architecture, DAGKc spans 427–561 (PGTHPLLVLV…LDRWYLEVMP (135 aa)). The segment at 768-788 (MMGPPQKSSFFSLRRKSRSKD) is disordered.

This sequence belongs to the eukaryotic diacylglycerol kinase family. In terms of tissue distribution, expressed specifically in brain. Highly expressed in cerebellar Purkinje cells (at protein level).

The protein localises to the membrane. It is found in the cytoplasm. It localises to the cytosol. The protein resides in the cytoskeleton. The catalysed reaction is a 1,2-diacyl-sn-glycerol + ATP = a 1,2-diacyl-sn-glycero-3-phosphate + ADP + H(+). It carries out the reaction 1,2-didecanoyl-sn-glycerol + ATP = 1,2-didecanoyl-sn-glycero-3-phosphate + ADP + H(+). The enzyme catalyses 1,2-di-(9Z-octadecenoyl)-sn-glycerol + ATP = 1,2-di-(9Z-octadecenoyl)-sn-glycero-3-phosphate + ADP + H(+). It catalyses the reaction 1-octadecanoyl-2-(9Z,12Z)-octadecadienoyl-sn-glycerol + ATP = 1-octadecanoyl-2-(9Z,12Z-octadecadienoyl)-sn-glycero-3-phosphate + ADP + H(+). The catalysed reaction is 1-octadecanoyl-2-(5Z,8Z,11Z,14Z-eicosatetraenoyl)-sn-glycerol + ATP = 1-octadecanoyl-2-(5Z,8Z,11Z,14Z-eicosatetraenoyl)-sn-glycero-3-phosphate + ADP + H(+). The protein operates within lipid metabolism; glycerolipid metabolism. Its activity is regulated as follows. The activity is calcium-dependent. Requires phosphatidylserine for maximal activity. Functionally, diacylglycerol kinase that converts diacylglycerol/DAG into phosphatidic acid/phosphatidate/PA and regulates the respective levels of these two bioactive lipids. Thereby, acts as a central switch between the signaling pathways activated by these second messengers with different cellular targets and opposite effects in numerous biological processes. Has no apparent specificity with regard to the acyl compositions of diacylglycerol. Specifically expressed in the cerebellum where it controls the level of diacylglycerol which in turn regulates the activity of protein kinase C gamma. Through protein kinase C gamma, indirectly regulates the dendritic development of Purkinje cells, cerebellar long term depression and ultimately cerebellar motor coordination. The chain is Diacylglycerol kinase gamma (Dgkg) from Rattus norvegicus (Rat).